An 87-amino-acid chain; its full sequence is Putative septation protein SpoVG (87 aa).

It belongs to the SpoVG family.

In terms of biological role, could be involved in septation. In Agathobacter rectalis (strain ATCC 33656 / DSM 3377 / JCM 17463 / KCTC 5835 / VPI 0990) (Eubacterium rectale), this protein is Putative septation protein SpoVG.